The following is a 157-amino-acid chain: Phosphopantetheine adenylyltransferase (157 aa).

Ser8 is a substrate binding site. ATP contacts are provided by residues 8-9 and His16; that span reads SF. The substrate site is built by Lys40, Thr72, and Arg86. Residues 87–89, Glu97, and 122–128 each bind ATP; these read GLR and FSFLSSS.

Belongs to the bacterial CoaD family. Homohexamer. Mg(2+) is required as a cofactor.

Its subcellular location is the cytoplasm. The catalysed reaction is (R)-4'-phosphopantetheine + ATP + H(+) = 3'-dephospho-CoA + diphosphate. It functions in the pathway cofactor biosynthesis; coenzyme A biosynthesis; CoA from (R)-pantothenate: step 4/5. Functionally, reversibly transfers an adenylyl group from ATP to 4'-phosphopantetheine, yielding dephospho-CoA (dPCoA) and pyrophosphate. This Prochlorococcus marinus (strain MIT 9211) protein is Phosphopantetheine adenylyltransferase.